A 230-amino-acid polypeptide reads, in one-letter code: RNA-binding protein 24 (230 aa).

An RRM domain is found at 11 to 88 (TKIFVGGLPY…RKANVNLAYL (78 aa)).

The protein localises to the nucleus. It is found in the cytoplasm. Its function is as follows. Multifunctional RNA-binding protein involved in the regulation of pre-mRNA splicing, mRNA stability and mRNA translation important for cell fate decision and differentiation. Plays a major role in pre-mRNA alternative splicing regulation. Mediates preferentially muscle-specific exon inclusion in numerous mRNAs important for striated cardiac and skeletal muscle cell differentiation. Binds to intronic splicing enhancer (ISE) composed of stretches of GU-rich motifs localized in flanking intron of exon that will be included by alternative splicing. Involved in embryonic stem cell (ESC) transition to cardiac cell differentiation by promoting pre-mRNA alternative splicing events of several pluripotency and/or differentiation genes. Plays a role in the regulation of mRNA stability and mRNA translation to which it is bound. Involved in myogenic differentiation by regulating myog levels. Binds to a huge amount of mRNAs. Required for embryonic heart development, sarcomer and M-band formation in striated muscles. The protein is RNA-binding protein 24 (rbm24) of Danio rerio (Zebrafish).